The following is a 330-amino-acid chain: Ketol-acid reductoisomerase (NADP(+)) (330 aa).

A KARI N-terminal Rossmann domain is found at Met-2–Thr-181. Residues Tyr-25 to Gln-28, Arg-48, Ser-52, and Asp-82 to Gln-85 contribute to the NADP(+) site. The active site involves His-107. Gly-133 lines the NADP(+) pocket. Residues Thr-182–Phe-327 form the KARI C-terminal knotted domain. 4 residues coordinate Mg(2+): Asp-190, Glu-194, Glu-226, and Glu-230. A substrate-binding site is contributed by Ser-251.

The protein belongs to the ketol-acid reductoisomerase family. Mg(2+) serves as cofactor.

The enzyme catalyses (2R)-2,3-dihydroxy-3-methylbutanoate + NADP(+) = (2S)-2-acetolactate + NADPH + H(+). The catalysed reaction is (2R,3R)-2,3-dihydroxy-3-methylpentanoate + NADP(+) = (S)-2-ethyl-2-hydroxy-3-oxobutanoate + NADPH + H(+). It participates in amino-acid biosynthesis; L-isoleucine biosynthesis; L-isoleucine from 2-oxobutanoate: step 2/4. It functions in the pathway amino-acid biosynthesis; L-valine biosynthesis; L-valine from pyruvate: step 2/4. Its function is as follows. Involved in the biosynthesis of branched-chain amino acids (BCAA). Catalyzes an alkyl-migration followed by a ketol-acid reduction of (S)-2-acetolactate (S2AL) to yield (R)-2,3-dihydroxy-isovalerate. In the isomerase reaction, S2AL is rearranged via a Mg-dependent methyl migration to produce 3-hydroxy-3-methyl-2-ketobutyrate (HMKB). In the reductase reaction, this 2-ketoacid undergoes a metal-dependent reduction by NADPH to yield (R)-2,3-dihydroxy-isovalerate. The protein is Ketol-acid reductoisomerase (NADP(+)) of Methanocorpusculum labreanum (strain ATCC 43576 / DSM 4855 / Z).